The primary structure comprises 500 residues: Proline/betaine transporter (500 aa).

Topologically, residues 1–37 (MLKRKKIKPITLGDVTIIDDGKLRKAITAASLGNAME) are cytoplasmic. The helical transmembrane segment at 38–58 (WFDFGVYGFVAYALGKVFFPG) threads the bilayer. The Periplasmic segment spans residues 59 to 65 (ADPSVQM). A helical transmembrane segment spans residues 66 to 86 (IAALATFSVPFLIRPLGGLFF). Residues 87–97 (GMLGDKYGRQK) lie on the Cytoplasmic side of the membrane. A helical transmembrane segment spans residues 98–118 (ILAITIVIMSISTFCIGLIPS). Residues 119–121 (YAT) lie on the Periplasmic side of the membrane. The chain crosses the membrane as a helical span at residues 122–142 (IGIWAPILLLLCKMAQGFSVG). Over 143-169 (GEYTGASIFVAEYSPDRKRGFMGSWLD) the chain is Cytoplasmic. The chain crosses the membrane as a helical span at residues 170-190 (FGSIAGFVLGAGVVVLISTIV). Over 191 to 194 (GEEN) the chain is Periplasmic. Residues 195-215 (FLEWGWRIPFFIALPLGIIGL) form a helical membrane-spanning segment. Over 216 to 260 (YLRHALEETPAFQQHVDKLEQGDREGLQDGPKVSFKEIATKHWRS) the chain is Cytoplasmic. Residues 261-281 (LLSCIGLVIATNVTYYMLLTY) form a helical membrane-spanning segment. Residues 282–297 (MPSYLSHNLHYSEDHG) lie on the Periplasmic side of the membrane. Residues 298–318 (VLIIIAIMIGMLFVQPVMGLL) traverse the membrane as a helical segment. Residues 319-325 (SDRFGRR) are Cytoplasmic-facing. Residues 326 to 346 (PFVIMGSIALFALAIPAFILI) form a helical membrane-spanning segment. The Periplasmic portion of the chain corresponds to 347–350 (NSNV). The chain crosses the membrane as a helical span at residues 351–371 (IGLIFAGLLMLAVILNCFTGV). Residues 372–390 (MASTLPAMFPTHIRYSALA) are Cytoplasmic-facing. The helical transmembrane segment at 391–411 (AAFNISVLIAGLTPTLAAWLV) threads the bilayer. The Periplasmic portion of the chain corresponds to 412-416 (ESSQD). A helical transmembrane segment spans residues 417 to 437 (LMMPAYYLMVIAVIGLITGIS). The Cytoplasmic segment spans residues 438–500 (MKETANRPLK…LVQQHPRIDE (63 aa)). Residues 453 to 498 (ASDIQEAKEILGEHYDNIEQKIDDIDQEIAELQVKRSRLVQQHPRI) adopt a coiled-coil conformation.

It belongs to the major facilitator superfamily. Metabolite:H+ Symporter (MHS) family (TC 2.A.1.6) family.

The protein localises to the cell inner membrane. Functionally, proton symporter that senses osmotic shifts and responds by importing osmolytes such as proline, glycine betaine, stachydrine, pipecolic acid, ectoine and taurine. It is both an osmosensor and an osmoregulator which is available to participate early in the bacterial osmoregulatory response. The sequence is that of Proline/betaine transporter (proP) from Salmonella typhimurium (strain LT2 / SGSC1412 / ATCC 700720).